Here is a 709-residue protein sequence, read N- to C-terminus: Eukaryotic translation initiation factor 3 subunit B (709 aa).

The tract at residues 1 to 98 (MSINEEEYLR…LFIQYKNVAD (98 aa)) is sufficient for interaction with HCR1 and TIF32. Residues 1 to 221 (MSINEEEYLR…GIQAWGGADF (221 aa)) form a sufficient for interaction with PIC8 region. The RRM domain occupies 37–124 (NYVIVDGAPI…HRLLVNRLSD (88 aa)).

Belongs to the eIF-3 subunit B family. Component of the eukaryotic translation initiation factor 3 (eIF-3) complex.

It localises to the cytoplasm. RNA-binding component of the eukaryotic translation initiation factor 3 (eIF-3) complex, which is involved in protein synthesis of a specialized repertoire of mRNAs and, together with other initiation factors, stimulates binding of mRNA and methionyl-tRNAi to the 40S ribosome. The eIF-3 complex specifically targets and initiates translation of a subset of mRNAs involved in cell proliferation. The chain is Eukaryotic translation initiation factor 3 subunit B from Lodderomyces elongisporus (strain ATCC 11503 / CBS 2605 / JCM 1781 / NBRC 1676 / NRRL YB-4239) (Yeast).